Reading from the N-terminus, the 66-residue chain is Photosystem II reaction center protein J (66 aa).

The chain crosses the membrane as a helical span at residues 36-56 (LWLVATAGGIAVIFVLGIFFY).

This sequence belongs to the PsbJ family. As to quaternary structure, PSII is composed of 1 copy each of membrane proteins PsbA, PsbB, PsbC, PsbD, PsbE, PsbF, PsbH, PsbI, PsbJ, PsbK, PsbL, PsbM, PsbT, PsbX, PsbY, Psb30/Ycf12, peripheral proteins PsbO, CyanoQ (PsbQ), PsbU, PsbV and a large number of cofactors. It forms dimeric complexes.

Its subcellular location is the cellular thylakoid membrane. Functionally, one of the components of the core complex of photosystem II (PSII). PSII is a light-driven water:plastoquinone oxidoreductase that uses light energy to abstract electrons from H(2)O, generating O(2) and a proton gradient subsequently used for ATP formation. It consists of a core antenna complex that captures photons, and an electron transfer chain that converts photonic excitation into a charge separation. This Prochlorococcus marinus (strain MIT 9215) protein is Photosystem II reaction center protein J.